The following is a 91-amino-acid chain: Large ribosomal subunit protein bL31B (91 aa).

The protein belongs to the bacterial ribosomal protein bL31 family. Type B subfamily. Part of the 50S ribosomal subunit.

The protein is Large ribosomal subunit protein bL31B of Neisseria meningitidis serogroup A / serotype 4A (strain DSM 15465 / Z2491).